Consider the following 278-residue polypeptide: HTH-type transcriptional activator RhaS (278 aa).

One can recognise an HTH araC/xylS-type domain in the interval 174–272 (NLLLAWLEDH…NWSPRDIRQG (99 aa)). 2 DNA-binding regions (H-T-H motif) span residues 191-212 (DAVA…KQQT) and 239-262 (VTDI…RREF).

In terms of assembly, binds DNA as a dimer.

Its subcellular location is the cytoplasm. Its function is as follows. Activates expression of the rhaBAD and rhaT operons. This chain is HTH-type transcriptional activator RhaS, found in Shigella boydii serotype 4 (strain Sb227).